The sequence spans 272 residues: Low-density lipoprotein receptor class A domain-containing protein 2 (272 aa).

Residues 1 to 25 (MEACCLLQLPQRLLLLGAAALTATA) form the signal peptide. At 26–233 (LETADLAELC…GSTDAHTSRS (208 aa)) the chain is on the extracellular side. N-linked (GlcNAc...) asparagine glycosylation occurs at asparagine 97. Positions 172-214 (PCGAYFRCQNGRCIPSSLVCDPWGMDNCGDGSDQGSWSPADCR) constitute an LDL-receptor class A domain. Intrachain disulfides connect cysteine 173–cysteine 184, cysteine 179–cysteine 199, and cysteine 191–cysteine 213. Residues 202–272 (GSDQGSWSPA…QDAALEGSTE (71 aa)) form a disordered region. A compositionally biased stretch (polar residues) spans 220 to 236 (PSQTGSTDAHTSRSLTP). The chain crosses the membrane as a helical span at residues 234–250 (LTPSPALGSAGSLWIAA). The Cytoplasmic segment spans residues 251-272 (ERSSPAGRDPTRQDAALEGSTE).

Belongs to the LDLR family.

It localises to the membrane. The polypeptide is Low-density lipoprotein receptor class A domain-containing protein 2 (LDLRAD2) (Homo sapiens (Human)).